The sequence spans 564 residues: Mercuric reductase (564 aa).

The 65-residue stretch at 1 to 65 folds into the HMA domain; sequence MSTLKITGMT…AVAGLGYRAT (65 aa). Cys11 and Cys14 together coordinate a metal cation. FAD contacts are provided by Ala109, Gly129, and Thr134. Cys135 and Cys140 are joined by a disulfide. 4 residues coordinate FAD: Lys144, Ala210, Asp406, and Val414. Hg(2+)-binding residues include Cys561 and Cys562.

This sequence belongs to the class-I pyridine nucleotide-disulfide oxidoreductase family. In terms of assembly, homodimer. Requires FAD as cofactor.

The catalysed reaction is Hg + NADP(+) + H(+) = Hg(2+) + NADPH. Its function is as follows. Resistance to Hg(2+) in bacteria appears to be governed by a specialized system which includes mercuric reductase. MerA protein is responsible for volatilizing mercury as Hg(0). This is Mercuric reductase (merA) from Shigella flexneri.